We begin with the raw amino-acid sequence, 289 residues long: Tachykinins (289 aa).

Residues Met1–Ala24 form the signal peptide. A propeptide spanning residues Ala25 to Val49 is cleaved from the precursor. The interval Glu28–Pro80 is disordered. The residue at position 61 (Arg61) is an Arginine amide. The segment covering Gly62–Ala72 has biased composition (basic and acidic residues). Residue Asn95 is modified to Asparagine amide. Arginine amide is present on Arg110. Val155 is modified (valine amide). Residues Gly156–Asp175 are disordered. Arginine amide occurs at positions 167, 198, 237, and 281. A propeptide spanning residues Pro285–Glu289 is cleaved from the precursor.

This sequence belongs to the tachykinin family.

Its subcellular location is the secreted. Its function is as follows. Tachykinins are active peptides which excite neurons, evoke behavioral responses, are potent vasodilators and secretagogues, and contract (directly or indirectly) many smooth muscles. Stimulates gut muscle contractions. The sequence is that of Tachykinins from Drosophila pseudoobscura pseudoobscura (Fruit fly).